The sequence spans 250 residues: MRKKIVVGNWKMNKNVAEGVALASSILENLDGGKMACEVGIAPAYPVLSEVGRVIEGSDICLVAQNCHYEDEGAYTGEVSVRMLDSLGCSYIIVGHSERRQYFGETNRTVNLRLKKALEGGMRVILCIGETLEEREAGVTDAIVTAQVREGLADIEDLGNVVLAYEPVWAIGTGKTATPEQADAVHASIRATISDMYGEADAEDIRIQYGGSVKPSNAVELFGMPNIDGGLIGGASLKADDFVAIVNAAG.

9-11 (NWK) serves as a coordination point for substrate. Histidine 96 acts as the Electrophile in catalysis. Glutamate 166 (proton acceptor) is an active-site residue. Substrate contacts are provided by residues glycine 172, serine 212, and 233 to 234 (GG).

It belongs to the triosephosphate isomerase family. As to quaternary structure, homodimer.

It localises to the cytoplasm. It catalyses the reaction D-glyceraldehyde 3-phosphate = dihydroxyacetone phosphate. It functions in the pathway carbohydrate biosynthesis; gluconeogenesis. The protein operates within carbohydrate degradation; glycolysis; D-glyceraldehyde 3-phosphate from glycerone phosphate: step 1/1. Its function is as follows. Involved in the gluconeogenesis. Catalyzes stereospecifically the conversion of dihydroxyacetone phosphate (DHAP) to D-glyceraldehyde-3-phosphate (G3P). This is Triosephosphate isomerase from Chlorobium phaeobacteroides (strain BS1).